A 945-amino-acid polypeptide reads, in one-letter code: Leucine--tRNA ligase (945 aa).

The 'HIGH' region motif lies at 43 to 53 (PYPNGAIHIGH). Positions 638–642 (KMSKS) match the 'KMSKS' region motif. An ATP-binding site is contributed by lysine 641.

It belongs to the class-I aminoacyl-tRNA synthetase family.

It is found in the cytoplasm. The enzyme catalyses tRNA(Leu) + L-leucine + ATP = L-leucyl-tRNA(Leu) + AMP + diphosphate. This is Leucine--tRNA ligase from Pyrobaculum neutrophilum (strain DSM 2338 / JCM 9278 / NBRC 100436 / V24Sta) (Thermoproteus neutrophilus).